A 624-amino-acid chain; its full sequence is DNA-directed RNA polymerase subunit gamma (624 aa).

Residues Cys70, Cys72, Cys85, and Cys88 each coordinate Zn(2+). Residues Asp466, Asp468, and Asp470 each contribute to the Mg(2+) site.

The protein belongs to the RNA polymerase beta' chain family. RpoC1 subfamily. In cyanobacteria the RNAP catalytic core is composed of 2 alpha, 1 beta, 1 beta', 1 gamma and 1 omega subunit. When a sigma factor is associated with the core the holoenzyme is formed, which can initiate transcription. Mg(2+) is required as a cofactor. It depends on Zn(2+) as a cofactor.

It catalyses the reaction RNA(n) + a ribonucleoside 5'-triphosphate = RNA(n+1) + diphosphate. In terms of biological role, DNA-dependent RNA polymerase catalyzes the transcription of DNA into RNA using the four ribonucleoside triphosphates as substrates. In Synechococcus sp. (strain ATCC 27144 / PCC 6301 / SAUG 1402/1) (Anacystis nidulans), this protein is DNA-directed RNA polymerase subunit gamma.